A 506-amino-acid chain; its full sequence is ESX-5 secretion system ATPase EccB5 (506 aa).

A helical transmembrane segment spans residues 56 to 76 (VVASVSAALVICLGALLWSFI).

Belongs to the EccB family. Part of the ESX-5 / type VII secretion system (T7SS), which is composed of cytosolic and membrane components. The ESX-5 membrane complex is composed of EccB5, EccC5, EccD5 and EccE5.

Its subcellular location is the cell inner membrane. An ATPase. Part of the ESX-5 specialized secretion system, which is responsible for the secretion of EsxN and a number of PE_PGRS and PPE proteins, including PPE41. The sequence is that of ESX-5 secretion system ATPase EccB5 from Mycobacterium tuberculosis (strain CDC 1551 / Oshkosh).